The following is a 466-amino-acid chain: Muscarinic acetylcholine receptor M2 (466 aa).

Over 1-22 (MNNSTNSSNNSLALTSPYKTFE) the chain is Extracellular. N-linked (GlcNAc...) asparagine glycosylation is found at Asn-2, Asn-3, Asn-6, and Asn-9. The chain crosses the membrane as a helical span at residues 23 to 45 (VVFIVLVAGSLSLVTIIGNILVM). At 46 to 59 (VSIKVNRHLQTVNN) the chain is on the cytoplasmic side. A helical membrane pass occupies residues 60–80 (YFLFSLACADLIIGVFSMNLY). The Extracellular portion of the chain corresponds to 81 to 97 (TLYTVIGYWPLGPVVCD). The cysteines at positions 96 and 176 are disulfide-linked. The chain crosses the membrane as a helical span at residues 98 to 119 (LWLALDYVVSNASVMNLLIISF). The short motif at 120 to 122 (DRY) is the Important for signaling element. Topologically, residues 120-139 (DRYFCVTKPLTYPVKRTTKM) are cytoplasmic. The chain crosses the membrane as a helical span at residues 140-162 (AGMMIAAAWVLSFILWAPAILFW). Topologically, residues 163–184 (QFIVGVRTVEDGECYIQFFSNA) are extracellular. The chain crosses the membrane as a helical span at residues 185–209 (AVTFGTAIAAFYLPVIIMTVLYWHI). The Cytoplasmic segment spans residues 210–387 (SRASKSRIKK…PPSREKKVTR (178 aa)). The interval 218–355 (KKDKKEPVAN…VVGSSGQNGD (138 aa)) is disordered. Phosphoserine is present on Ser-232. Basic and acidic residues predominate over residues 254–270 (GLEHNKIQNGKAPRDPV). Composition is skewed to polar residues over residues 284–293 (NDSTSVSAVA), 304–313 (DENTVSTSLG), and 334–353 (SDSC…SGQN). The chain crosses the membrane as a helical span at residues 388-410 (TILAILLAFIITWAPYNVMVLIN). Residues 411-418 (TFCAPCIP) lie on the Extracellular side of the membrane. Cys-413 and Cys-416 form a disulfide bridge. Residues 419 to 442 (NTVWTIGYWLCYINSTINPACYAL) traverse the membrane as a helical segment. The Important for signaling motif lies at 436–440 (NPACY). Over 443 to 466 (CNATFKKTFKHLLMCHYKNIGATR) the chain is Cytoplasmic. Residues Thr-446, Thr-450, and Thr-465 each carry the phosphothreonine modification.

This sequence belongs to the G-protein coupled receptor 1 family. Muscarinic acetylcholine receptor subfamily. CHRM2 sub-subfamily. Interacts with ARRB1 and ARRB2. Interacts with RACK1; the interaction regulates CHRM2 internalization. Phosphorylated in response to agonist treatment.

It localises to the cell membrane. Its subcellular location is the postsynaptic cell membrane. Functionally, the muscarinic acetylcholine receptor mediates various cellular responses, including inhibition of adenylate cyclase, breakdown of phosphoinositides and modulation of potassium channels through the action of G proteins. Primary transducing effect is adenylate cyclase inhibition. Signaling promotes phospholipase C activity, leading to the release of inositol trisphosphate (IP3); this then triggers calcium ion release into the cytosol. The polypeptide is Muscarinic acetylcholine receptor M2 (CHRM2) (Homo sapiens (Human)).